The sequence spans 225 residues: NAD(P)H-quinone oxidoreductase subunit K, chloroplastic (225 aa).

[4Fe-4S] cluster contacts are provided by cysteine 43, cysteine 44, cysteine 108, and cysteine 139.

The protein belongs to the complex I 20 kDa subunit family. As to quaternary structure, NDH is composed of at least 16 different subunits, 5 of which are encoded in the nucleus. [4Fe-4S] cluster serves as cofactor.

It is found in the plastid. Its subcellular location is the chloroplast thylakoid membrane. The enzyme catalyses a plastoquinone + NADH + (n+1) H(+)(in) = a plastoquinol + NAD(+) + n H(+)(out). It catalyses the reaction a plastoquinone + NADPH + (n+1) H(+)(in) = a plastoquinol + NADP(+) + n H(+)(out). NDH shuttles electrons from NAD(P)H:plastoquinone, via FMN and iron-sulfur (Fe-S) centers, to quinones in the photosynthetic chain and possibly in a chloroplast respiratory chain. The immediate electron acceptor for the enzyme in this species is believed to be plastoquinone. Couples the redox reaction to proton translocation, and thus conserves the redox energy in a proton gradient. The polypeptide is NAD(P)H-quinone oxidoreductase subunit K, chloroplastic (Barbarea verna (Land cress)).